Consider the following 273-residue polypeptide: Gap junction beta-5 protein (273 aa).

Residues 1–20 lie on the Cytoplasmic side of the membrane; that stretch reads MNWSIFEGLLSGVNKYSTAF. A helical membrane pass occupies residues 21 to 40; sequence GRIWLSLVFIFRVLVYLVTA. Residues 41 to 75 are Extracellular-facing; that stretch reads ERVWSDDHKDFDCNTRQPGCSNVCFDEFFPVSHVR. Residues 76–98 traverse the membrane as a helical segment; sequence LWALQLILVTCPSLLVVMHVAYR. Over 99 to 126 the chain is Cytoplasmic; it reads EVQEKRHREAHGENSGRLYLNPGKKRGG. The chain crosses the membrane as a helical span at residues 127-149; that stretch reads LWWTYVCSLVFKASVDIAFLYVF. The Extracellular segment spans residues 150–187; the sequence is HSFYPKYILPPVVKCHADPCPNIVDCFISKPSEKNIFT. A helical membrane pass occupies residues 188 to 210; it reads LFMVATAAICILLNLVELIYLVS. Residues 211–273 lie on the Cytoplasmic side of the membrane; the sequence is KRCHECLAAR…PRDHVKKTIL (63 aa).

It belongs to the connexin family. Beta-type (group I) subfamily. A connexon is composed of a hexamer of connexins.

It is found in the cell membrane. Its subcellular location is the cell junction. The protein localises to the gap junction. In terms of biological role, one gap junction consists of a cluster of closely packed pairs of transmembrane channels, the connexons, through which materials of low MW diffuse from one cell to a neighboring cell. The chain is Gap junction beta-5 protein (GJB5) from Homo sapiens (Human).